The chain runs to 198 residues: MIIGAKFITSLVKFDENLSSNFSEVAFLGRSNVGKSSLINSLCKQKNLAKSSATPGKTQLINFFEVTCKRNEEKFNINFIDLPGFGYAKVSKNLKEIWNQNLDEFLKLRTSIKLFIHLIDSRHTHLEIDVNLNDYLKRFLRPDQKILKVFTKCDKLNQSEKAKLKNEFKDSILVSNLNKFGLDSLEDIIINQTLGLDK.

The EngB-type G domain maps to 21 to 195; it reads NFSEVAFLGR…EDIIINQTLG (175 aa). GTP-binding positions include 29–36, 56–60, 81–84, 151–154, and 174–176; these read GRSNVGKS, GKTQL, DLPG, TKCD, and VSN. Ser-36 and Thr-58 together coordinate Mg(2+).

Belongs to the TRAFAC class TrmE-Era-EngA-EngB-Septin-like GTPase superfamily. EngB GTPase family. The cofactor is Mg(2+).

Its function is as follows. Necessary for normal cell division and for the maintenance of normal septation. This chain is Probable GTP-binding protein EngB, found in Campylobacter jejuni subsp. jejuni serotype O:23/36 (strain 81-176).